We begin with the raw amino-acid sequence, 501 residues long: Glucans biosynthesis protein G (501 aa).

The first 25 residues, 1–25, serve as a signal peptide directing secretion; the sequence is MNRRQVLTGLAALPLLQAKPDPAAA.

The protein belongs to the OpgD/OpgG family.

Its subcellular location is the periplasm. Its pathway is glycan metabolism; osmoregulated periplasmic glucan (OPG) biosynthesis. Its function is as follows. Involved in the biosynthesis of osmoregulated periplasmic glucans (OPGs). This Rhodopseudomonas palustris (strain ATCC BAA-98 / CGA009) protein is Glucans biosynthesis protein G.